The chain runs to 574 residues: Developmental and secondary metabolism regulator veA (574 aa).

Disordered regions lie at residues 1–22 (MATR…SRIT), 39–60 (ERAR…VDPP), 255–500 (RSSD…GAGK), and 513–540 (RSYE…YPRR). One can recognise a Velvet domain in the interval 25–230 (GKKLTYKLNV…AEQGCRVRIR (206 aa)). A Nuclear localization signal motif is present at residues 39 to 44 (ERARAC). Pro residues-rich tracts occupy residues 314–323 (RPLPPAPGPA) and 330–341 (PAPPAPPAPPSH). Composition is skewed to polar residues over residues 343-353 (PGYQSHLSFGS), 385-394 (HARNPSTSAE), 406-415 (RMSTERSSYP), and 448-458 (VAQSAAPRSQT). A PEST region spans residues 457–498 (QTPSSSLVPSLPPLKALSGDYPNNLSQSSSSTSQSPSHDLGA). Low complexity-rich tracts occupy residues 459 to 474 (PSSS…KALS) and 482 to 493 (SQSSSSTSQSPS). Residues 513–525 (RSYEDSFGHDDRP) show a composition bias toward basic and acidic residues.

The protein belongs to the velvet family. VeA subfamily. As to quaternary structure, component of the heterotrimeric velvet complex composed of laeA, veA and velB; VeA acting as a bridging protein between laeA and velB.

It localises to the nucleus. The protein resides in the cytoplasm. Functionally, component of the velvet transcription factor complex that controls sexual/asexual developmental ratio in response to light, promoting sexual development in the darkness while stimulating asexual sporulation under illumination. The velvet complex hat acts as a global regulator for secondary metabolite gene expression. Controls the expression of the cyclopiazonic acid, aflatrem, and aflatoxin gene clusters. Controls the expression of the sclerotium-specific pigment asparasone A gene cluster. Controls the expression of the aflavarin gene cluster. also controls the production of hydrolases and other extracellular proteins during growth on natural starch-based substrates. Regulates genes involved in the High Osmolarity Glycerol (HOG) signaling pathway. Required for the conidial and sclerotial density-dependent production. The chain is Developmental and secondary metabolism regulator veA from Aspergillus flavus (strain ATCC 200026 / FGSC A1120 / IAM 13836 / NRRL 3357 / JCM 12722 / SRRC 167).